Here is a 137-residue protein sequence, read N- to C-terminus: Thionin-like protein 1 (137 aa).

The signal sequence occupies residues 1–23; sequence MEDKRVAMLVVMMLVMGNMLIEA.

It belongs to the plant thionin (TC 1.C.44) family. In terms of processing, is disulfide-linked.

The protein localises to the secreted. Functionally, may be involved in plant defense. The chain is Thionin-like protein 1 from Arabidopsis thaliana (Mouse-ear cress).